Here is a 329-residue protein sequence, read N- to C-terminus: Aspartate carbamoyltransferase catalytic subunit (329 aa).

Carbamoyl phosphate is bound by residues R66 and T67. Position 94 (K94) interacts with L-aspartate. Carbamoyl phosphate-binding residues include R116, H149, and Q152. R189 and R243 together coordinate L-aspartate. The carbamoyl phosphate site is built by G284 and P285.

This sequence belongs to the aspartate/ornithine carbamoyltransferase superfamily. ATCase family. As to quaternary structure, heterododecamer (2C3:3R2) of six catalytic PyrB chains organized as two trimers (C3), and six regulatory PyrI chains organized as three dimers (R2).

The enzyme catalyses carbamoyl phosphate + L-aspartate = N-carbamoyl-L-aspartate + phosphate + H(+). Its pathway is pyrimidine metabolism; UMP biosynthesis via de novo pathway; (S)-dihydroorotate from bicarbonate: step 2/3. Functionally, catalyzes the condensation of carbamoyl phosphate and aspartate to form carbamoyl aspartate and inorganic phosphate, the committed step in the de novo pyrimidine nucleotide biosynthesis pathway. This is Aspartate carbamoyltransferase catalytic subunit from Gloeobacter violaceus (strain ATCC 29082 / PCC 7421).